Reading from the N-terminus, the 649-residue chain is Protein mitoshell (649 aa).

The span at 167 to 176 shows a compositional bias: basic and acidic residues; sequence LRSEARKPRP. 3 disordered regions span residues 167–193, 389–414, and 485–512; these read LRSEARKPRPESVVPEESSISSLESGA, HGPSAFSTPNNQIRNNAASKGQEPTS, and ALPSQEIPNAPTPKSSPQSDRPRDVRSY. The segment covering 177–191 has biased composition (low complexity); the sequence is ESVVPEESSISSLES. Polar residues-rich tracts occupy residues 393-414 and 485-503; these read AFSTPNNQIRNNAASKGQEPTS and ALPSQEIPNAPTPKSSPQS.

Functionally, required for male meiotic cytokinesis through its involvement in the regulation of mitochondrial aggregation and fusion, astral spindle assembly and contractile ring formation. In Drosophila melanogaster (Fruit fly), this protein is Protein mitoshell.